Consider the following 352-residue polypeptide: Nicotinate-nucleotide--dimethylbenzimidazole phosphoribosyltransferase (352 aa).

Glu-316 serves as the catalytic Proton acceptor.

The protein belongs to the CobT family.

It carries out the reaction 5,6-dimethylbenzimidazole + nicotinate beta-D-ribonucleotide = alpha-ribazole 5'-phosphate + nicotinate + H(+). It functions in the pathway nucleoside biosynthesis; alpha-ribazole biosynthesis; alpha-ribazole from 5,6-dimethylbenzimidazole: step 1/2. In terms of biological role, catalyzes the synthesis of alpha-ribazole-5'-phosphate from nicotinate mononucleotide (NAMN) and 5,6-dimethylbenzimidazole (DMB). The polypeptide is Nicotinate-nucleotide--dimethylbenzimidazole phosphoribosyltransferase (Ruminiclostridium cellulolyticum (strain ATCC 35319 / DSM 5812 / JCM 6584 / H10) (Clostridium cellulolyticum)).